Reading from the N-terminus, the 338-residue chain is MNLQRFPRYPLTFGPTPIQPLKRLSAHLGGKVKLYAKREDCNSGLAFGGNKTRKLEYLIPDALAQGADTLVSIGGVQSNQTRQVAAVAAHLGMKCVLVQEHWVNYDDPVYDRVGNIQLSRMMGADVRLVADGFDIGIRRSWEEAMESVRQAGGKPYPIPAGCSEHPLGGLGFVGFAEEVRAQEAELGFKFDYIVVCSVTGSTQAGMVVGFAADGRADRVIGIDASATPEKTHAQITRIARHTAEIVELGRRIDEQDVVLDTRYAGPEYGLPNDGTLEAIRLCARLEGVLTDPVYEGKSMHGMIDKVRLGEFEPGSKVLYAHLGGVPALSAYAEIFRNG.

Lys-51 is subject to N6-(pyridoxal phosphate)lysine. Residue Ser-78 is the Nucleophile of the active site.

Belongs to the ACC deaminase/D-cysteine desulfhydrase family. Homotrimer. Pyridoxal 5'-phosphate serves as cofactor.

The enzyme catalyses 1-aminocyclopropane-1-carboxylate + H2O = 2-oxobutanoate + NH4(+). In terms of biological role, catalyzes a cyclopropane ring-opening reaction, the irreversible conversion of 1-aminocyclopropane-1-carboxylate (ACC) to ammonia and alpha-ketobutyrate. Allows growth on ACC as a nitrogen source. This Burkholderia ambifaria (strain MC40-6) protein is 1-aminocyclopropane-1-carboxylate deaminase.